The primary structure comprises 424 residues: Probable methyltransferase EP424R (424 aa).

The Adrift-type SAM-dependent 2'-O-MTase domain occupies 104-316 (QIVTNAWLKM…TYIVGKNRLR (213 aa)). Residues G136 and D229 each contribute to the S-adenosyl-L-methionine site. K269 acts as the Proton acceptor in catalysis.

It is found in the virion. This African swine fever virus (strain Badajoz 1971 Vero-adapted) (Ba71V) protein is Probable methyltransferase EP424R.